Consider the following 118-residue polypeptide: Large ribosomal subunit protein bL20 (118 aa).

It belongs to the bacterial ribosomal protein bL20 family.

Functionally, binds directly to 23S ribosomal RNA and is necessary for the in vitro assembly process of the 50S ribosomal subunit. It is not involved in the protein synthesizing functions of that subunit. The sequence is that of Large ribosomal subunit protein bL20 from Thermotoga petrophila (strain ATCC BAA-488 / DSM 13995 / JCM 10881 / RKU-1).